The sequence spans 82 residues: UPF0180 protein BT9727_1277 (82 aa).

It belongs to the UPF0180 family.

The chain is UPF0180 protein BT9727_1277 from Bacillus thuringiensis subsp. konkukian (strain 97-27).